Reading from the N-terminus, the 530-residue chain is Autoinducer-2 kinase (530 aa).

This sequence belongs to the FGGY kinase family.

Its subcellular location is the cytoplasm. It carries out the reaction (S)-4,5-dihydroxypentane-2,3-dione + ATP = (2S)-2-hydroxy-3,4-dioxopentyl phosphate + ADP + H(+). In terms of biological role, catalyzes the phosphorylation of autoinducer-2 (AI-2) to phospho-AI-2, which subsequently inactivates the transcriptional regulator LsrR and leads to the transcription of the lsr operon. Phosphorylates the ring-open form of (S)-4,5-dihydroxypentane-2,3-dione (DPD), which is the precursor to all AI-2 signaling molecules, at the C5 position. The polypeptide is Autoinducer-2 kinase (Escherichia coli O139:H28 (strain E24377A / ETEC)).